Consider the following 660-residue polypeptide: Bifunctional polymyxin resistance protein ArnA (660 aa).

Residues 1-304 (MKTVVFAYHD…MLGLVQGSRL (304 aa)) are formyltransferase ArnAFT. 86–88 (HLI) contributes to the (6R)-10-formyltetrahydrofolate binding site. Residue His104 is the Proton donor; for formyltransferase activity of the active site. (6R)-10-formyltetrahydrofolate-binding positions include Arg114 and 136-140 (VKRAD). The interval 314–660 (RRTRVLILGV…RTVDLTDKPS (347 aa)) is dehydrogenase ArnADH. Residues Asp347 and 368-369 (DI) each bind NAD(+). UDP-alpha-D-glucuronate contacts are provided by residues Ala393, Tyr398, and 432 to 433 (TS). Residue Glu434 is the Proton acceptor; for decarboxylase activity of the active site. UDP-alpha-D-glucuronate contacts are provided by residues Arg460, Asn492, 526–535 (KLIDGGKQKR), and Tyr613. Residue Arg619 is the Proton donor; for decarboxylase activity of the active site.

It in the N-terminal section; belongs to the Fmt family. UDP-L-Ara4N formyltransferase subfamily. The protein in the C-terminal section; belongs to the NAD(P)-dependent epimerase/dehydratase family. UDP-glucuronic acid decarboxylase subfamily. As to quaternary structure, homohexamer, formed by a dimer of trimers.

The catalysed reaction is UDP-alpha-D-glucuronate + NAD(+) = UDP-beta-L-threo-pentopyranos-4-ulose + CO2 + NADH. It catalyses the reaction UDP-4-amino-4-deoxy-beta-L-arabinose + (6R)-10-formyltetrahydrofolate = UDP-4-deoxy-4-formamido-beta-L-arabinose + (6S)-5,6,7,8-tetrahydrofolate + H(+). Its pathway is nucleotide-sugar biosynthesis; UDP-4-deoxy-4-formamido-beta-L-arabinose biosynthesis; UDP-4-deoxy-4-formamido-beta-L-arabinose from UDP-alpha-D-glucuronate: step 1/3. It functions in the pathway nucleotide-sugar biosynthesis; UDP-4-deoxy-4-formamido-beta-L-arabinose biosynthesis; UDP-4-deoxy-4-formamido-beta-L-arabinose from UDP-alpha-D-glucuronate: step 3/3. The protein operates within bacterial outer membrane biogenesis; lipopolysaccharide biosynthesis. Bifunctional enzyme that catalyzes the oxidative decarboxylation of UDP-glucuronic acid (UDP-GlcUA) to UDP-4-keto-arabinose (UDP-Ara4O) and the addition of a formyl group to UDP-4-amino-4-deoxy-L-arabinose (UDP-L-Ara4N) to form UDP-L-4-formamido-arabinose (UDP-L-Ara4FN). The modified arabinose is attached to lipid A and is required for resistance to polymyxin and cationic antimicrobial peptides. The polypeptide is Bifunctional polymyxin resistance protein ArnA (Shigella flexneri).